We begin with the raw amino-acid sequence, 503 residues long: Annexin A11 (503 aa).

3 stretches are compositionally biased toward pro residues: residues 1–17, 80–145, and 155–169; these read MSYP…PPAP, GYPP…PYPG, and SPVP…PSYP. Disordered stretches follow at residues 1-35 and 56-178; these read MSYP…MPPI and AANM…GTVT. 4 Annexin repeats span residues 198-269, 270-341, 353-425, and 429-500; these read FDPL…ALMK, TPIL…SLSQ, SLVQ…AVVK, and NTPA…KICG. N6-acetyllysine is present on residues Lys246 and Lys253. Lys477 bears the N6-acetyllysine mark.

Belongs to the annexin family. In terms of assembly, interacts with PDCD6 in a calcium-dependent manner. Interacts with KIF23 during cytokinesis. Interacts with S100A6.

It is found in the cytoplasm. The protein localises to the melanosome. The protein resides in the nucleus envelope. It localises to the nucleus. Its subcellular location is the nucleoplasm. It is found in the cytoskeleton. The protein localises to the spindle. In terms of biological role, required for midbody formation and completion of the terminal phase of cytokinesis. Binds specifically to calcyclin in a calcium-dependent manner. The polypeptide is Annexin A11 (ANXA11) (Oryctolagus cuniculus (Rabbit)).